The primary structure comprises 854 residues: Aryl hydrocarbon receptor (854 aa).

Residues 1–9 constitute a propeptide that is removed on maturation; sequence MSSGANITY. Residues 1-38 form a disordered region; sequence MSSGANITYASRKRRKPVQKTVKPIPAEGIKSNPSKRH. Short sequence motifs (nuclear localization signal) lie at residues 12 to 15 and 36 to 41; these read RKRR and KRHRDR. A bHLH domain is found at 26–79; it reads PAEGIKSNPSKRHRDRLNTELDRLASLLPFPQDVINKLDKLSVLRLSVSYLRAK. The interval 37–65 is DNA-binding; the sequence is RHRDRLNTELDRLASLLPFPQDVINKLDK. Required for maintaining the overall integrity of the AHR:ARNT heterodimer and its transcriptional activity regions lie at residues 49-81, 116-124, and 264-266; these read LASL…AKSF, LLQALNGFV, and FAI. The Nuclear export signal signature appears at 63–71; that stretch reads LDKLSVLRL. In terms of domain architecture, PAS 1 spans 111-175; the sequence is QEGEFLLQAL…AEFQRQLHWA (65 aa). One can recognise a PAS 2 domain in the interval 270 to 340; it reads LQPPSILEIR…CAESHIRMIK (71 aa). A PAC domain is found at 346–387; the sequence is MTVFRLLAKHSRWRWVQSNARLIYRNGRPDYIIATQRPLTDE. A disordered region spans residues 425–451; sequence LPIRTKSNTSRKDWAPQSTPSKDSFHP. The segment covering 440-451 has biased composition (polar residues); it reads PQSTPSKDSFHP.

Homodimer. Heterodimer; efficient DNA binding requires dimerization with another bHLH protein. Interacts with ARNT; the heterodimer ARNT:AHR binds to core DNA sequence 5'-TGCGTG-3' within the dioxin response element (DRE) of target gene promoters and activates their transcription. Binds MYBBP1A. Interacts with coactivators including SRC-1, RIP140 and NOCA7, and with the corepressor SMRT. Interacts with NEDD8 and IVNS1ABP. Interacts with BMAL1. Interacts with HSP90AB1. Interacts with TIPARP; leading to mono-ADP-ribosylation of AHR and subsequent inhibition of AHR. In terms of processing, mono-ADP-ribosylated, leading to inhibit transcription activator activity of AHR.

It localises to the cytoplasm. It is found in the nucleus. In terms of biological role, ligand-activated transcription factor that enables cells to adapt to changing conditions by sensing compounds from the environment, diet, microbiome and cellular metabolism, and which plays important roles in development, immunity and cancer. Upon ligand binding, translocates into the nucleus, where it heterodimerizes with ARNT and induces transcription by binding to xenobiotic response elements (XRE). Regulates a variety of biological processes, including angiogenesis, hematopoiesis, drug and lipid metabolism, cell motility and immune modulation. Xenobiotics can act as ligands: upon xenobiotic-binding, activates the expression of multiple phase I and II xenobiotic chemical metabolizing enzyme genes (such as the CYP1A1 gene). Mediates biochemical and toxic effects of halogenated aromatic hydrocarbons. Next to xenobiotics, natural ligands derived from plants, microbiota, and endogenous metabolism are potent AHR agonists. Tryptophan (Trp) derivatives constitute an important class of endogenous AHR ligands. Acts as a negative regulator of anti-tumor immunity: indoles and kynurenic acid generated by Trp catabolism act as ligand and activate AHR, thereby promoting AHR-driven cancer cell motility and suppressing adaptive immunity. Regulates the circadian clock by inhibiting the basal and circadian expression of the core circadian component PER1. Inhibits PER1 by repressing the CLOCK-BMAL1 heterodimer mediated transcriptional activation of PER1. The heterodimer ARNT:AHR binds to core DNA sequence 5'-TGCGTG-3' within the dioxin response element (DRE) of target gene promoters and activates their transcription. This chain is Aryl hydrocarbon receptor (Ahr), found in Mus spicilegus (Steppe mouse).